Reading from the N-terminus, the 473-residue chain is Poly(A) polymerase catalytic subunit (473 aa).

Catalysis depends on residues D193 and D195.

Belongs to the poxviridae poly(A) polymerase catalytic subunit family. As to quaternary structure, heterodimer of a large (catalytic) subunit and a small (regulatory) subunit.

The catalysed reaction is RNA(n) + ATP = RNA(n)-3'-adenine ribonucleotide + diphosphate. Its function is as follows. Polymerase that creates the 3'-poly(A) tail of mRNA's. This Crocodylus johnstoni (Australian freshwater crocodile) protein is Poly(A) polymerase catalytic subunit (PAPL).